A 225-amino-acid polypeptide reads, in one-letter code: UPF0758 protein BCG9842_B0662 (225 aa).

Positions 103-225 constitute an MPN domain; the sequence is SIRSPEDCAK…FVSLKEKGHI (123 aa). 3 residues coordinate Zn(2+): His-174, His-176, and Asp-187. The short motif at 174-187 is the JAMM motif element; that stretch reads HNHPSGDPTPSRED.

Belongs to the UPF0758 family.

This is UPF0758 protein BCG9842_B0662 from Bacillus cereus (strain G9842).